The primary structure comprises 359 residues: Proton-gated ion channel (359 aa).

The N-terminal stretch at 1–43 (MFPTGWRPKLSESIAASRMLWQPMAAVAVVQIGLLWFSPPVWG) is a signal peptide. The Periplasmic portion of the chain corresponds to 44–235 (QDMVSPPPPI…LDYQLRISRQ (192 aa)). A helical transmembrane segment spans residues 236-258 (YFSYIPNIILPMLFILFISWTAF). Topologically, residues 259 to 261 (WST) are cytoplasmic. The chain crosses the membrane as a helical span at residues 262 to 286 (SYEANVTLVVSTLIAHIAFNILVET). Residues 287 to 294 (NLPKTPYM) are Periplasmic-facing. A helical transmembrane segment spans residues 295-323 (TYTGAIIFMIYLFYFVAVIEVTVQHYLKV). The Cytoplasmic segment spans residues 324–326 (ESQ). The helical transmembrane segment at 327–359 (PARAASITRASRIAFPVVFLLANIILAFLFFGF) threads the bilayer.

The protein belongs to the ligand-gated ion channel (TC 1.A.9) family. As to quaternary structure, homopentamer.

The protein localises to the cell inner membrane. Its activity is regulated as follows. Tetraethylammonium (TEA) and tetrabutylammonium (TBA) inhibit the proton-activated currents in a dose- and voltage-dependent manner in vitro, whereas the blocker of acid sensing ion channels, amiloride, has no effect. Channel current of GLIC can be inhibited by inhaled and intravenous general anesthetics at and below concentrations used clinically. Ion conduction is also inhibited by lidocaine and by divalent transition metal ions such as cadmium ions. Cationic channel with similar permeabilities for Na(+) and K(+), that is activated by an increase of the proton concentration on the extracellular side. Displays no permeability for chloride ions. Shows slow kinetics of activation, no desensitization and a single channel conductance of 8 pS. Might contribute to adaptation to external pH change. The chain is Proton-gated ion channel (glvI) from Gloeobacter violaceus (strain ATCC 29082 / PCC 7421).